Reading from the N-terminus, the 134-residue chain is MNTLSLNIVTPNGSVYDREDVNLAVLQTTAGEIGVMYGHIPTVAALEIGYVKINFDGGSEYIAVSEGFVEVRQDKLSIIVQTAEPANEIDVARAELAKSRAESHLNNEEDNSDVNRAKRALERANNRIRVANLQ.

This sequence belongs to the ATPase epsilon chain family. In terms of assembly, F-type ATPases have 2 components, CF(1) - the catalytic core - and CF(0) - the membrane proton channel. CF(1) has five subunits: alpha(3), beta(3), gamma(1), delta(1), epsilon(1). CF(0) has three main subunits: a, b and c.

The protein resides in the cell membrane. Functionally, produces ATP from ADP in the presence of a proton gradient across the membrane. This is ATP synthase epsilon chain from Staphylococcus saprophyticus subsp. saprophyticus (strain ATCC 15305 / DSM 20229 / NCIMB 8711 / NCTC 7292 / S-41).